Reading from the N-terminus, the 778-residue chain is Exo-beta-D-glucosaminidase (778 aa).

Substrate is bound by residues Y55, G104–E105, D180–E181, E308, E349, and Y381. E181 functions as the Proton donor in the catalytic mechanism. The Nucleophile role is filled by E349.

Belongs to the glycosyl hydrolase 35 family. As to quaternary structure, homodimer.

It localises to the cytoplasm. It carries out the reaction beta-D-glucosaminyl-(1-&gt;4)-N-acetyl-D-glucosamine + H2O = D-glucosamine + N-acetyl-D-glucosamine. It participates in glycan degradation; chitin degradation. Exo-type enzyme that specifically cleaves the non-reducing terminal glycosidic bond of chitooligosaccharides. Catalyzes the hydrolysis of GlcN-GlcNAc to glucosamine (GlcN) and N-acetylglucosamine (GlcNAc). Involved in chitin degradation. Can also hydrolyze chitosan and chitooligosaccharides of various chain lengths. In Pyrococcus horikoshii (strain ATCC 700860 / DSM 12428 / JCM 9974 / NBRC 100139 / OT-3), this protein is Exo-beta-D-glucosaminidase.